The chain runs to 234 residues: MEGGAYGAGKAGGAFDPYTLVRQPHTILRVVSWVFSIVVFGSIVNEGYLNNPEEEEEFCIYNRNPNACSYGVTVGVLAFLTCLLYLALDVYFPQISSVKDRKKAVLSDIGVSAFWAFFWFVGFCFLANQWQVSKPKDNPLNEGTDAARAAIAFSFFSIFTWAGQAVLAFQRYQIGADSALFSQDYMDPSQDSSMPYAPYVEPSAGSDPAGMGGTYQHPANAFDAEPQGYQSQGY.

Position 1 is an N-acetylmethionine (Met-1). The Cytoplasmic segment spans residues Met-1–Gln-23. The MARVEL domain maps to Leu-20–Gln-173. Residues Pro-24–Val-44 form a helical membrane-spanning segment. Topologically, residues Asn-45 to Gly-71 are lumenal. Residues Val-72–Phe-92 traverse the membrane as a helical segment. The Cytoplasmic portion of the chain corresponds to Pro-93 to Lys-103. A helical membrane pass occupies residues Ala-104 to Cys-124. Over Phe-125–Arg-148 the chain is Lumenal. A helical membrane pass occupies residues Ala-149–Phe-169. Residues Gln-170–Tyr-234 are Cytoplasmic-facing. Positions Glu-201 to Tyr-234 are disordered.

This sequence belongs to the synaptogyrin family.

The protein localises to the cytoplasmic vesicle. It localises to the secretory vesicle. The protein resides in the synaptic vesicle membrane. Its subcellular location is the melanosome. In terms of biological role, may play a role in regulated exocytosis. Modulates the localization of synaptophysin/SYP into synaptic-like microvesicles and may therefore play a role in synaptic-like microvesicle formation and/or maturation. Involved in the regulation of short-term and long-term synaptic plasticity. The chain is Synaptogyrin-1 from Mus musculus (Mouse).